The chain runs to 101 residues: Small ribosomal subunit protein uS14 (101 aa).

Belongs to the universal ribosomal protein uS14 family. In terms of assembly, part of the 30S ribosomal subunit. Contacts proteins S3 and S10.

Binds 16S rRNA, required for the assembly of 30S particles and may also be responsible for determining the conformation of the 16S rRNA at the A site. This is Small ribosomal subunit protein uS14 from Saccharophagus degradans (strain 2-40 / ATCC 43961 / DSM 17024).